Here is a 49-residue protein sequence, read N- to C-terminus: Glutathione peroxidase (49 aa).

The protein belongs to the glutathione peroxidase family.

It carries out the reaction 2 glutathione + H2O2 = glutathione disulfide + 2 H2O. Inhibited by Cu(2+), SDS and DTT. Activity is slightly increased by Fe(2+), Mn(2+), triton X-100 and EDTA. In terms of biological role, glutathione peroxidase which may protect the cell from oxidative damage. This is Glutathione peroxidase from Lactiplantibacillus plantarum (Lactobacillus plantarum).